Reading from the N-terminus, the 523-residue chain is Bifunctional purine biosynthesis protein PurH (523 aa).

One can recognise an MGS-like domain in the interval M1 to T150.

This sequence belongs to the PurH family.

It catalyses the reaction (6R)-10-formyltetrahydrofolate + 5-amino-1-(5-phospho-beta-D-ribosyl)imidazole-4-carboxamide = 5-formamido-1-(5-phospho-D-ribosyl)imidazole-4-carboxamide + (6S)-5,6,7,8-tetrahydrofolate. It carries out the reaction IMP + H2O = 5-formamido-1-(5-phospho-D-ribosyl)imidazole-4-carboxamide. The protein operates within purine metabolism; IMP biosynthesis via de novo pathway; 5-formamido-1-(5-phospho-D-ribosyl)imidazole-4-carboxamide from 5-amino-1-(5-phospho-D-ribosyl)imidazole-4-carboxamide (10-formyl THF route): step 1/1. Its pathway is purine metabolism; IMP biosynthesis via de novo pathway; IMP from 5-formamido-1-(5-phospho-D-ribosyl)imidazole-4-carboxamide: step 1/1. The polypeptide is Bifunctional purine biosynthesis protein PurH (Rhodopirellula baltica (strain DSM 10527 / NCIMB 13988 / SH1)).